Consider the following 424-residue polypeptide: UDP-N-acetylglucosamine 1-carboxyvinyltransferase (424 aa).

Residue 22-23 (KN) coordinates phosphoenolpyruvate. Arg-95 contributes to the UDP-N-acetyl-alpha-D-glucosamine binding site. Residue Cys-119 is the Proton donor of the active site. At Cys-119 the chain carries 2-(S-cysteinyl)pyruvic acid O-phosphothioketal. UDP-N-acetyl-alpha-D-glucosamine-binding positions include 124 to 128 (RPVDQ), Asp-311, and Ile-333.

It belongs to the EPSP synthase family. MurA subfamily.

It is found in the cytoplasm. The enzyme catalyses phosphoenolpyruvate + UDP-N-acetyl-alpha-D-glucosamine = UDP-N-acetyl-3-O-(1-carboxyvinyl)-alpha-D-glucosamine + phosphate. The protein operates within cell wall biogenesis; peptidoglycan biosynthesis. Functionally, cell wall formation. Adds enolpyruvyl to UDP-N-acetylglucosamine. The polypeptide is UDP-N-acetylglucosamine 1-carboxyvinyltransferase (Polaromonas sp. (strain JS666 / ATCC BAA-500)).